The sequence spans 130 residues: MADQRFYATGKRKTAVARVWLKPGSGSVTINKRTIEEYIDRETSKMVIYQPLVLTGTFGKLDVTVNVLGGGGSGQAGAIRHGISKALLEFNPEFREVLKRAGFLTRDSRVKERKKYGRRSARARFQYSKR.

This sequence belongs to the universal ribosomal protein uS9 family.

The protein is Small ribosomal subunit protein uS9 of Syntrophobacter fumaroxidans (strain DSM 10017 / MPOB).